We begin with the raw amino-acid sequence, 216 residues long: Small ribosomal subunit protein uS5 (216 aa).

A disordered region spans residues 1 to 55 (MDKKLENQKDLLNQDPKVELNSQSVAKNPLNSREVKPIQRRRPLRKNARDKNSKP). Polar residues predominate over residues 20–31 (LNSQSVAKNPLN). The region spanning 57–120 (FEERVIAIHR…KDAQNRLVSV (64 aa)) is the S5 DRBM domain.

It belongs to the universal ribosomal protein uS5 family. Part of the 30S ribosomal subunit. Contacts proteins S4 and S8.

With S4 and S12 plays an important role in translational accuracy. Functionally, located at the back of the 30S subunit body where it stabilizes the conformation of the head with respect to the body. In Mesomycoplasma hyopneumoniae (strain 7448) (Mycoplasma hyopneumoniae), this protein is Small ribosomal subunit protein uS5.